The sequence spans 272 residues: Shikimate dehydrogenase (NADP(+)) (272 aa).

Residues 14–16 (SLS) and threonine 61 contribute to the shikimate site. Catalysis depends on lysine 65, which acts as the Proton acceptor. Aspartate 102 contributes to the shikimate binding site. Residues 127–131 (GAGGA), 151–156 (NRTPSK), and leucine 215 contribute to the NADP(+) site. A shikimate-binding site is contributed by tyrosine 217. Glycine 239 contacts NADP(+).

The protein belongs to the shikimate dehydrogenase family. Homodimer.

The enzyme catalyses shikimate + NADP(+) = 3-dehydroshikimate + NADPH + H(+). It participates in metabolic intermediate biosynthesis; chorismate biosynthesis; chorismate from D-erythrose 4-phosphate and phosphoenolpyruvate: step 4/7. Involved in the biosynthesis of the chorismate, which leads to the biosynthesis of aromatic amino acids. Catalyzes the reversible NADPH linked reduction of 3-dehydroshikimate (DHSA) to yield shikimate (SA). In Coxiella burnetii (strain CbuK_Q154) (Coxiella burnetii (strain Q154)), this protein is Shikimate dehydrogenase (NADP(+)).